We begin with the raw amino-acid sequence, 262 residues long: MGFLSGKRILVTGVASKLSIAYGIAQAMHREGAELAFTYQNDKLKGRVEEFAAQLGSDIVLQCDVAEDASIDTMFAELGKVWPKFDGFVHSIGFAPGDQLDGDYVNAVTREGFKIAHDISSYSFVAMAKACRSMLNPGSALLTLSYLGAERAIPNYNVMGLAKASLEANVRYMANAMGPEGVRVNAISAGPIRTLAASGIKDFRKMLAHCEAVTPIRRTVTIEDVGNSAAFLCSDLSAGISGEVVHVDGGFSIAAMNELELK.

NAD(+)-binding positions include Gly13, 19-20 (SI), Gln40, 64-65 (DV), and Ile92. Ala95 contacts substrate. Active-site proton acceptor residues include Tyr146 and Tyr156. Residues Lys163 and 192 to 196 (IRTLA) each bind NAD(+).

This sequence belongs to the short-chain dehydrogenases/reductases (SDR) family. FabI subfamily. As to quaternary structure, homotetramer.

It carries out the reaction a 2,3-saturated acyl-[ACP] + NAD(+) = a (2E)-enoyl-[ACP] + NADH + H(+). The catalysed reaction is (2E)-butenoyl-[ACP] + NADH + H(+) = butanoyl-[ACP] + NAD(+). The enzyme catalyses (2E)-decenoyl-[ACP] + NADH + H(+) = decanoyl-[ACP] + NAD(+). It catalyses the reaction (2E)-hexadecenoyl-[ACP] + NADH + H(+) = hexadecanoyl-[ACP] + NAD(+). It carries out the reaction (2E,9Z)-hexadecadienoyl-[ACP] + NADH + H(+) = (9Z)-hexadecenoyl-[ACP] + NAD(+). The catalysed reaction is (2E)-5-methylhexenoyl-[ACP] + NADH + H(+) = 5-methylhexanoyl-[ACP] + NAD(+). The protein operates within lipid metabolism; fatty acid biosynthesis. Its pathway is cofactor biosynthesis; biotin biosynthesis. Its activity is regulated as follows. Inhibited by diazaborines, triclosan (5-chloro-2-2,4-dichlorophenoxyphenol), 1,4-disubstituted imidazoles, 1,4-benzodiazepine derivatives, naphthyridinone derivatives, luteolin and curcumin. The antibiotic diazaborine interferes with the activity by binding to the protein and NAD. Functionally, catalyzes the reduction of a carbon-carbon double bond in an enoyl moiety that is covalently linked to an acyl carrier protein (ACP). Involved in the elongation cycle of fatty acid which are used in the lipid metabolism and in the biotin biosynthesis. This Escherichia coli (strain K12) protein is Enoyl-[acyl-carrier-protein] reductase [NADH] FabI (fabI).